A 310-amino-acid chain; its full sequence is Glutaminase (310 aa).

Positions 67, 118, 161, 168, 192, 244, and 262 each coordinate substrate.

This sequence belongs to the glutaminase family. As to quaternary structure, homotetramer.

The enzyme catalyses L-glutamine + H2O = L-glutamate + NH4(+). The protein is Glutaminase of Legionella pneumophila subsp. pneumophila (strain Philadelphia 1 / ATCC 33152 / DSM 7513).